Reading from the N-terminus, the 230-residue chain is Biosynthetic peptidoglycan transglycosylase (230 aa).

Residues 10-30 (IFLFFIAVIFVYQFWIFSQIV) traverse the membrane as a helical segment.

It belongs to the glycosyltransferase 51 family.

It localises to the cell inner membrane. The catalysed reaction is [GlcNAc-(1-&gt;4)-Mur2Ac(oyl-L-Ala-gamma-D-Glu-L-Lys-D-Ala-D-Ala)](n)-di-trans,octa-cis-undecaprenyl diphosphate + beta-D-GlcNAc-(1-&gt;4)-Mur2Ac(oyl-L-Ala-gamma-D-Glu-L-Lys-D-Ala-D-Ala)-di-trans,octa-cis-undecaprenyl diphosphate = [GlcNAc-(1-&gt;4)-Mur2Ac(oyl-L-Ala-gamma-D-Glu-L-Lys-D-Ala-D-Ala)](n+1)-di-trans,octa-cis-undecaprenyl diphosphate + di-trans,octa-cis-undecaprenyl diphosphate + H(+). It participates in cell wall biogenesis; peptidoglycan biosynthesis. Peptidoglycan polymerase that catalyzes glycan chain elongation from lipid-linked precursors. This Nitrosospira multiformis (strain ATCC 25196 / NCIMB 11849 / C 71) protein is Biosynthetic peptidoglycan transglycosylase.